A 503-amino-acid polypeptide reads, in one-letter code: Lithocholate 6-beta-hydroxylase (503 aa).

Heme is bound at residue Cys442.

This sequence belongs to the cytochrome P450 family. It depends on heme as a cofactor.

It is found in the endoplasmic reticulum membrane. The protein resides in the microsome membrane. The catalysed reaction is lithocholate + reduced [NADPH--hemoprotein reductase] + O2 = 6beta-hydroxylithocholate + oxidized [NADPH--hemoprotein reductase] + H2O + H(+). In terms of biological role, catalyzes the 6 beta-hydroxylation of lithocholic acid and steroid hormones. This is Lithocholate 6-beta-hydroxylase (CYP3A10) from Mesocricetus auratus (Golden hamster).